The following is a 516-amino-acid chain: (R)-citramalate synthase CimA (516 aa).

In terms of domain architecture, Pyruvate carboxyltransferase spans 8 to 269 (LEILDVTLRD…KTNINEIAIT (262 aa)). Arginine 16 acts as the Proton donor in catalysis. Pyruvate-binding positions include 16 to 17 (RD) and tyrosine 144. Residue aspartate 17 participates in Mn(2+) binding. The active-site Proton acceptor is the glutamate 146. Threonine 179 provides a ligand contact to pyruvate. Positions 207 and 209 each coordinate Mn(2+).

The protein belongs to the alpha-IPM synthase/homocitrate synthase family. In terms of assembly, homodimer. The cofactor is Mn(2+).

The catalysed reaction is pyruvate + acetyl-CoA + H2O = (3R)-citramalate + CoA + H(+). It participates in amino-acid biosynthesis; L-isoleucine biosynthesis; 2-oxobutanoate from pyruvate: step 1/3. Regulated by the end-product isoleucine via a feedback inhibition. The binding of isoleucine has inhibitory effects on the binding of both pyruvate and acetyl-CoA. May act via conformational change of the dimer interface of the regulatory domain, leading to inhibition of the catalytic reaction. Its function is as follows. Catalyzes the condensation of pyruvate and acetyl-coenzyme A to form (R)-citramalate. Shows strict substrate specificity for pyruvate. Cannot use alpha-ketoisovalerate, alpha-ketobutyrate, alpha-ketoisocaproate, alpha-ketoglutarate or glyoxylate. The polypeptide is (R)-citramalate synthase CimA (Leptospira interrogans serogroup Icterohaemorrhagiae serovar Lai (strain 56601)).